We begin with the raw amino-acid sequence, 122 residues long: Putative protein adenylyltransferase MJ1547 (122 aa).

A GSX(10)DXD motif motif is present at residues 11 to 25 (GSYAKNEYTKRSDID). The Mg(2+) site is built by D23, D25, and D48.

The protein belongs to the MntA antitoxin family. In terms of assembly, probably forms a complex with cognate toxin MJ1548. The cofactor is Mg(2+).

It catalyses the reaction L-tyrosyl-[protein] + ATP = O-(5'-adenylyl)-L-tyrosyl-[protein] + diphosphate. The catalysed reaction is O-(5'-adenylyl)-L-tyrosyl-[protein] + ATP = O-[5'-(adenylyl-(5'-&gt;3')-adenylyl)]-L-tyrosyl-[protein] + diphosphate. Its function is as follows. Probable antitoxin component of a putative type VII toxin-antitoxin (TA) system. Neutralizes cognate toxic MJ1548 by di-AMPylation. The protein is Putative protein adenylyltransferase MJ1547 of Methanocaldococcus jannaschii (strain ATCC 43067 / DSM 2661 / JAL-1 / JCM 10045 / NBRC 100440) (Methanococcus jannaschii).